A 392-amino-acid polypeptide reads, in one-letter code: MAFLKLTEQNVQGKTVLIRADMNVPFKDGKISDDTRIRASLASVKYCLDNGASVIVMTHLGRPTEGEFHPEDDVAPVAAHLGGLLGKDVKVLNDWRENKPALNAGDVVMLQNVRINKGEKKNDLELGKAYASLCDVFVNDAFGTAHRAQASTEAVAQAAPVACAGVLMAGELDALGKALKQPARPMVAIVAGSKVSTKLTILESLADKVDQLIVGGGIANTFLLAEGKAIGKSLAEHDLVEESKKIMAKMAAKGGSVPLPTDVVVAKAFAADAEAVVKDIADVAEDEMILDIGPKSAAALADLLKAADTVVWNGPVGVFEFDQFAGGTKALTEAIAQSKAFSIAGGGDTLAAIAKFGVTDQIGYISTGGGAFLEFLEGKELPAVAALEKRGE.

Substrate is bound by residues 21–23 (DMN), arginine 36, 59–62 (HLGR), arginine 114, and arginine 147. ATP-binding positions include lysine 198, glutamate 320, and 346–349 (GGDT).

This sequence belongs to the phosphoglycerate kinase family. In terms of assembly, monomer.

The protein localises to the cytoplasm. It carries out the reaction (2R)-3-phosphoglycerate + ATP = (2R)-3-phospho-glyceroyl phosphate + ADP. It functions in the pathway carbohydrate degradation; glycolysis; pyruvate from D-glyceraldehyde 3-phosphate: step 2/5. In Neisseria meningitidis serogroup C (strain 053442), this protein is Phosphoglycerate kinase.